Here is an 84-residue protein sequence, read N- to C-terminus: Large ribosomal subunit protein bL27c (84 aa).

Positions 1–23 (MAHKKGAGSTKNGRDSNAKRLGV) are disordered.

This sequence belongs to the bacterial ribosomal protein bL27 family.

The protein localises to the plastid. The protein resides in the chloroplast. This chain is Large ribosomal subunit protein bL27c, found in Thalassiosira pseudonana (Marine diatom).